Consider the following 306-residue polypeptide: 5'-hydroxyaverantin dehydrogenase (306 aa).

NADP(+) contacts are provided by Ser25, Ile27, Gln48, Lys52, and Asp73. Residue Ser173 is the Proton donor of the active site. 4 residues coordinate NADP(+): Tyr187, Lys191, Val220, and Thr222. Residue Tyr187 is the Proton acceptor of the active site. Lys191 (lowers pKa of active site Tyr) is an active-site residue.

It belongs to the short-chain dehydrogenases/reductases (SDR) family. As to quaternary structure, homodimer.

It is found in the cytoplasm. The protein resides in the cytosol. The enzyme catalyses (1'S,5'S)-5'-hydroxyaverantin + NAD(+) = (S)-5'-oxoaverantin + NADH + H(+). It carries out the reaction (1'S,5'R)-5'-hydroxyaverantin + NAD(+) = (S)-5'-oxoaverantin + NADH + 2 H(+). It participates in mycotoxin biosynthesis. 5'-hydroxyaverantin dehydrogenase; part of the fragmented gene cluster that mediates the biosynthesis of dothistromin (DOTH), a polyketide toxin very similar in structure to the aflatoxin precursor, versicolorin B. The first step of the pathway is the conversion of acetate to norsolorinic acid (NOR) and requires the fatty acid synthase subunits hexA and hexB, as well as the polyketide synthase pksA. PksA combines a hexanoyl starter unit and 7 malonyl-CoA extender units to synthesize the precursor NOR. The hexanoyl starter unit is provided to the acyl-carrier protein (ACP) domain by the fungal fatty acid synthase hexA/hexB. The second step is the conversion of NOR to averantin (AVN) and requires the norsolorinic acid ketoreductase nor1, which catalyzes the dehydration of norsolorinic acid to form (1'S)-averantin. The cytochrome P450 monooxygenase avnA then catalyzes the hydroxylation of AVN to 5'hydroxyaverantin (HAVN). The next step is performed by adhA that transforms HAVN to averufin (AVF). Averufin might then be converted to hydroxyversicolorone by cypX and avfA. Hydroxyversicolorone is further converted versiconal hemiacetal acetate (VHA) by moxY. VHA is then the substrate for the versiconal hemiacetal acetate esterase est1 to yield versiconal (VAL). Versicolorin B synthase vbsA then converts VAL to versicolorin B (VERB) by closing the bisfuran ring. Then, the activity of the versicolorin B desaturase verB leads to versicolorin A (VERA). DotB, a predicted chloroperoxidase, may perform epoxidation of the A-ring of VERA. Alternatively, a cytochrome P450, such as cypX or avnA could catalyze this step. It is also possible that another, uncharacterized, cytochrome P450 enzyme is responsible for this step. Opening of the epoxide could potentially be achieved by the epoxide hydrolase epoA. However, epoA seems not to be required for DOTH biosynthesis, but other epoxide hydrolases may have the ability to complement this hydrolysis. Alternatively, opening of the epoxide ring could be achieved non-enzymatically. The next step is the deoxygenation of ring A to yield the 5,8-dihydroxyanthraquinone which is most likely catalyzed by the NADPH dehydrogenase encoded by ver1. The last stages of DOTH biosynthesis are proposed to involve hydroxylation of the bisfuran. OrdB and norB might have oxidative roles here. An alternative possibility is that cytochrome P450 monoogenases such as avnA and cypX might perform these steps in addition to previously proposed steps. The chain is 5'-hydroxyaverantin dehydrogenase from Dothistroma septosporum (strain NZE10 / CBS 128990) (Red band needle blight fungus).